The following is a 623-amino-acid chain: Immunity-related GTPase family Q protein (623 aa).

Cys152 and Cys158 are joined by a disulfide. The stretch at 155–180 forms a coiled coil; the sequence is SDGCEELERLRAALQSQAEALRRLLP. An LIR 1 motif is present at residues 186–189; that stretch reads FEVL. Thr203 is modified (phosphothreonine). The 227-residue stretch at 223-449 folds into the IRG-type G domain; that stretch reads ARLDLAVAGK…PGLCEWLRRA (227 aa). The interval 334–393 is disordered; it reads EGEDPECLGEGKMENPKGESLKNAGGGGLENALSKGREKCSAGSQKAGSGEGPGKAGSEG. Residues 342 to 353 are compositionally biased toward basic and acidic residues; it reads GEGKMENPKGES. Residues 421 to 424 carry the LIR 2 motif; that stretch reads WEVL.

It belongs to the TRAFAC class dynamin-like GTPase superfamily. IRG family. Interacts (via LIR motif 1) with GABARAPL2. Interacts (via LIR motif 2) with MAP1LC3B/LC3B.

The protein localises to the lysosome. Its subcellular location is the cytoplasmic vesicle. It localises to the autophagosome. Autophagy receptor that specifically promotes clearance of misfolded MHC class I molecules by targeting them to the lysosome for degradation. Acts as a molecular adapter that specifically recognizes and binds (1) misfolded MHC class I molecules following their ubiquitination, as well as (2) autophagy-related proteins, promoting the recruitment of misfolded MHC class I molecules to autophagy machinery for degradation. Degradation of misfolded MHC class I molecules is essential to prevent accumulation of defective MHC class I complexes at the surface of CD8(+) T-cells and prevent a stronger T-cell-mediated response. In contrast to other members of the family, does not show GTPase activity. The sequence is that of Immunity-related GTPase family Q protein from Homo sapiens (Human).